A 509-amino-acid chain; its full sequence is Cobyric acid synthase (509 aa).

The region spanning 262 to 459 (EIKVGIIKLP…IHGIFENDSW (198 aa)) is the GATase cobBQ-type domain. Catalysis depends on cysteine 343, which acts as the Nucleophile. Residue histidine 451 is part of the active site.

Belongs to the CobB/CobQ family. CobQ subfamily.

Its pathway is cofactor biosynthesis; adenosylcobalamin biosynthesis. Its function is as follows. Catalyzes amidations at positions B, D, E, and G on adenosylcobyrinic A,C-diamide. NH(2) groups are provided by glutamine, and one molecule of ATP is hydrogenolyzed for each amidation. In Prochlorococcus marinus (strain MIT 9301), this protein is Cobyric acid synthase.